The following is a 240-amino-acid chain: Putative exosome complex component RRP41 (240 aa).

This sequence belongs to the RNase PH family. In terms of assembly, component of the RNA exosome complex.

The protein resides in the cytoplasm. Its subcellular location is the nucleus. It is found in the nucleolus. The protein localises to the nucleoplasm. Its function is as follows. Non-catalytic component of the RNA exosome complex which has 3'-&gt;5' exoribonuclease activity and participates in a multitude of cellular RNA processing and degradation events. The chain is Putative exosome complex component RRP41 (exos-4.1) from Caenorhabditis elegans.